Consider the following 1247-residue polypeptide: E3 ubiquitin-protein ligase hecw-1 (1247 aa).

Residues 602–635 form the WW 1 domain; the sequence is TPPESHWKTYLDAKKRKFYVNHVTKETRWTKPDT. The disordered stretch occupies residues 633–659; the sequence is PDTLNNNHIEPETPVHKRLSDRSASPR. Positions 641 to 653 are enriched in basic and acidic residues; it reads IEPETPVHKRLSD. The WW 2 domain maps to 745-777; the sequence is QPLPSGWECITMNNRTVFLNHANKETSFYDPRI. The 334-residue stretch at 914-1247 folds into the HECT domain; the sequence is DPFVLKKSRL…IVNGMSYSIE (334 aa). Catalysis depends on cysteine 1215, which acts as the Glycyl thioester intermediate.

Expressed in the nervous system throughout the body. In the anterior ganglion, expression is limited to the two lateral outer labial neurons OLLL and OLLR.

It localises to the cytoplasm. The enzyme catalyses S-ubiquitinyl-[E2 ubiquitin-conjugating enzyme]-L-cysteine + [acceptor protein]-L-lysine = [E2 ubiquitin-conjugating enzyme]-L-cysteine + N(6)-ubiquitinyl-[acceptor protein]-L-lysine.. The protein operates within protein modification; protein ubiquitination. Functionally, E3 ubiquitin-protein ligase. Functions in the OLL neurons in the anterior ganglion to inhibit avoidance to microbial pathogens such as P.aeruginosa although worms do display avoidance behavior, vacating a P.aeruginosa lawn within 24 hours. Likely to act by inhibiting the neuropeptide receptor npr-1. This chain is E3 ubiquitin-protein ligase hecw-1, found in Caenorhabditis elegans.